Here is a 159-residue protein sequence, read N- to C-terminus: Ribosomal RNA large subunit methyltransferase H (159 aa).

Residues L76, G108, and 127–132 (FSKMTF) each bind S-adenosyl-L-methionine.

This sequence belongs to the RNA methyltransferase RlmH family. Homodimer.

The protein localises to the cytoplasm. It carries out the reaction pseudouridine(1915) in 23S rRNA + S-adenosyl-L-methionine = N(3)-methylpseudouridine(1915) in 23S rRNA + S-adenosyl-L-homocysteine + H(+). Functionally, specifically methylates the pseudouridine at position 1915 (m3Psi1915) in 23S rRNA. The polypeptide is Ribosomal RNA large subunit methyltransferase H (Bacillus velezensis (strain DSM 23117 / BGSC 10A6 / LMG 26770 / FZB42) (Bacillus amyloliquefaciens subsp. plantarum)).